Consider the following 534-residue polypeptide: Cytochrome P450 monooxygenase AN1598 (534 aa).

N-linked (GlcNAc...) asparagine glycosylation is present at asparagine 3. Residues 25 to 45 (LYLEILGVLSVVYLLQTLVAY) form a helical membrane-spanning segment. Asparagine 95 is a glycosylation site (N-linked (GlcNAc...) asparagine). Cysteine 464 contributes to the heme binding site. The N-linked (GlcNAc...) asparagine glycan is linked to asparagine 498.

This sequence belongs to the cytochrome P450 family. The cofactor is heme.

Its subcellular location is the membrane. The protein operates within secondary metabolite biosynthesis; terpenoid biosynthesis. Bifunctional terpene synthase; part of the gene cluster that mediates the biosynthesis of the diterpene ent-pimara-8(14),15-diene (PD). Within the cluster, the HMG-CoA reductase AN1593 functions in the mevalonate pathway, which produces isoprenoid precursors. The geranylgeranyl pyrophosphate (GGPP) synthase AN1592 is needed in the formation of GGPP, the precursor for diterpenes. Lastly, the pimaradiene synthase pbcA performs the 2 cyclization steps that convert GGPP to ent-pimara-8(14),15-diene. The putative roles of the remaining cluster enzymes in ent-pimara-8(14),15-diene biosynthesis is unclear. The cytochrome P450 monooxygenase AN1598, the glutathione S-transferase AN1595, the oxidoreductases AN1596 and AN1597 probably function as decorative enzymes. It is possible that in biological conditions the compound is oxidized to ent-pimara-8(14),15-dien-19-oic acid, which is a bioactive diterpene compound predominant in many plant extracts. The polypeptide is Cytochrome P450 monooxygenase AN1598 (Emericella nidulans (strain FGSC A4 / ATCC 38163 / CBS 112.46 / NRRL 194 / M139) (Aspergillus nidulans)).